The following is a 418-amino-acid chain: Putative competence-damage inducible protein (418 aa).

This sequence belongs to the CinA family.

The sequence is that of Putative competence-damage inducible protein from Streptococcus pneumoniae (strain JJA).